The primary structure comprises 96 residues: 5-hydroxytryptamine receptor 2B (96 aa).

The Extracellular segment spans residues 1–8 (CNQSTLQM). An N-linked (GlcNAc...) asparagine glycan is attached at Asn-2. A helical membrane pass occupies residues 9-30 (LLEIFVWIGYVSSGVNPLVYTL). The short motif at 24-28 (NPLVY) is the NPxxY motif; important for ligand-induced conformation changes and signaling element. The Cytoplasmic portion of the chain corresponds to 31–96 (FNKTFRDAFG…STMYQSPVRL (66 aa)). A lipid anchor (S-palmitoyl cysteine) is attached at Cys-45.

The protein belongs to the G-protein coupled receptor 1 family. In terms of assembly, interacts (via C-terminus) with MPDZ.

It localises to the cell membrane. The protein localises to the synapse. It is found in the synaptosome. Functionally, G-protein coupled receptor for 5-hydroxytryptamine (serotonin). Also functions as a receptor for various ergot alkaloid derivatives and psychoactive substances. Ligand binding causes a conformation change that triggers signaling via guanine nucleotide-binding proteins (G proteins) and modulates the activity of downstream effectors. HTR2B is coupled to G(q)/G(11) G alpha proteins and activates phospholipase C-beta, releasing diacylglycerol (DAG) and inositol 1,4,5-trisphosphate (IP3) second messengers that modulate the activity of phosphatidylinositol 3-kinase and promote the release of Ca(2+) ions from intracellular stores, respectively. Beta-arrestin family members inhibit signaling via G proteins and mediate activation of alternative signaling pathways. Plays a role in the regulation of dopamine and 5-hydroxytryptamine release, 5-hydroxytryptamine uptake and in the regulation of extracellular dopamine and 5-hydroxytryptamine levels, and thereby affects neural activity. May play a role in the perception of pain. Plays a role in the regulation of behavior, including impulsive behavior. Required for normal proliferation of embryonic cardiac myocytes and normal heart development. Protects cardiomyocytes against apoptosis. Plays a role in the adaptation of pulmonary arteries to chronic hypoxia. Plays a role in vasoconstriction. Required for normal osteoblast function and proliferation, and for maintaining normal bone density. Required for normal proliferation of the interstitial cells of Cajal in the intestine. This Cavia porcellus (Guinea pig) protein is 5-hydroxytryptamine receptor 2B (HTR2B).